Here is a 427-residue protein sequence, read N- to C-terminus: 3-isopropylmalate dehydratase large subunit (427 aa).

Residues Cys308, Cys368, and Cys371 each contribute to the [4Fe-4S] cluster site.

Belongs to the aconitase/IPM isomerase family. LeuC type 2 subfamily. As to quaternary structure, heterodimer of LeuC and LeuD. Requires [4Fe-4S] cluster as cofactor.

It carries out the reaction (2R,3S)-3-isopropylmalate = (2S)-2-isopropylmalate. It functions in the pathway amino-acid biosynthesis; L-leucine biosynthesis; L-leucine from 3-methyl-2-oxobutanoate: step 2/4. In terms of biological role, catalyzes the isomerization between 2-isopropylmalate and 3-isopropylmalate, via the formation of 2-isopropylmaleate. The chain is 3-isopropylmalate dehydratase large subunit from Geobacter sulfurreducens (strain ATCC 51573 / DSM 12127 / PCA).